The primary structure comprises 84 residues: Cell division topological specificity factor (84 aa).

The protein belongs to the MinE family.

In terms of biological role, prevents the cell division inhibition by proteins MinC and MinD at internal division sites while permitting inhibition at polar sites. This ensures cell division at the proper site by restricting the formation of a division septum at the midpoint of the long axis of the cell. The sequence is that of Cell division topological specificity factor from Burkholderia ambifaria (strain MC40-6).